A 92-amino-acid polypeptide reads, in one-letter code: Progonadoliberin-1 (92 aa).

Positions 1–23 (MGLIPKLLAGLVLLTLCVENGSG) are cleaved as a signal peptide. The residue at position 24 (Gln24) is a Pyrrolidone carboxylic acid. Residue Gly33 is modified to Glycine amide.

Belongs to the GnRH family. Post-translationally, the precursor is cleaved by ACE, which removes the Gly-Lys-Arg peptide at the C-terminus, leading to mature hormone. The mature form of Gonadoliberin-1 is also cleaved and degraded by ACE.

It localises to the secreted. Its function is as follows. Stimulates the secretion of gonadotropins; it stimulates the secretion of both luteinizing and follicle-stimulating hormones. This is Progonadoliberin-1 (GNRH1) from Cavia porcellus (Guinea pig).